The following is a 291-amino-acid chain: ATP synthase gamma chain (291 aa).

Belongs to the ATPase gamma chain family. As to quaternary structure, F-type ATPases have 2 components, CF(1) - the catalytic core - and CF(0) - the membrane proton channel. CF(1) has five subunits: alpha(3), beta(3), gamma(1), delta(1), epsilon(1). CF(0) has three main subunits: a, b and c.

It is found in the cell inner membrane. Its function is as follows. Produces ATP from ADP in the presence of a proton gradient across the membrane. The gamma chain is believed to be important in regulating ATPase activity and the flow of protons through the CF(0) complex. The sequence is that of ATP synthase gamma chain from Cupriavidus metallidurans (strain ATCC 43123 / DSM 2839 / NBRC 102507 / CH34) (Ralstonia metallidurans).